We begin with the raw amino-acid sequence, 271 residues long: Formamidopyrimidine-DNA glycosylase (271 aa).

Pro-2 functions as the Schiff-base intermediate with DNA in the catalytic mechanism. Residue Glu-3 is the Proton donor of the active site. The Proton donor; for beta-elimination activity role is filled by Lys-58. DNA-binding residues include His-91 and Arg-109. Residues 236–270 (FVYGREGLACRVCATPVRRVVIGQRSTFFCPRCQR) form an FPG-type zinc finger. Arg-260 serves as the catalytic Proton donor; for delta-elimination activity.

Belongs to the FPG family. Monomer. Zn(2+) is required as a cofactor.

It carries out the reaction Hydrolysis of DNA containing ring-opened 7-methylguanine residues, releasing 2,6-diamino-4-hydroxy-5-(N-methyl)formamidopyrimidine.. The enzyme catalyses 2'-deoxyribonucleotide-(2'-deoxyribose 5'-phosphate)-2'-deoxyribonucleotide-DNA = a 3'-end 2'-deoxyribonucleotide-(2,3-dehydro-2,3-deoxyribose 5'-phosphate)-DNA + a 5'-end 5'-phospho-2'-deoxyribonucleoside-DNA + H(+). Its function is as follows. Involved in base excision repair of DNA damaged by oxidation or by mutagenic agents. Acts as a DNA glycosylase that recognizes and removes damaged bases. Has a preference for oxidized purines, such as 7,8-dihydro-8-oxoguanine (8-oxoG). Has AP (apurinic/apyrimidinic) lyase activity and introduces nicks in the DNA strand. Cleaves the DNA backbone by beta-delta elimination to generate a single-strand break at the site of the removed base with both 3'- and 5'-phosphates. This chain is Formamidopyrimidine-DNA glycosylase, found in Aromatoleum aromaticum (strain DSM 19018 / LMG 30748 / EbN1) (Azoarcus sp. (strain EbN1)).